The sequence spans 230 residues: uncharacterized protein (230 aa).

Residues 17 to 37 (AGALSLGIGFFALASALWFLI) traverse the membrane as a helical segment. A glycan (N-linked (GlcNAc...) asparagine) is linked at N126.

It localises to the membrane. This is an uncharacterized protein from Mus musculus (Mouse).